A 472-amino-acid chain; its full sequence is Uronate isomerase (472 aa).

The protein belongs to the metallo-dependent hydrolases superfamily. Uronate isomerase family.

The catalysed reaction is D-glucuronate = D-fructuronate. It catalyses the reaction aldehydo-D-galacturonate = keto-D-tagaturonate. It participates in carbohydrate metabolism; pentose and glucuronate interconversion. The sequence is that of Uronate isomerase from Halalkalibacterium halodurans (strain ATCC BAA-125 / DSM 18197 / FERM 7344 / JCM 9153 / C-125) (Bacillus halodurans).